A 239-amino-acid polypeptide reads, in one-letter code: Dolichyldiphosphatase (239 aa).

Residues 1-34 lie on the Lumenal side of the membrane; the sequence is MNSTAAAINPNPNVIPFDDTYILYDSHDFLSFLS. The helical transmembrane segment at 35-55 threads the bilayer; it reads AYFSLMPILVLAFYLSWFIIT. Topologically, residues 56 to 131 are cytoplasmic; that stretch reads RELEACIVAF…KIYTSWKNLN (76 aa). The helical transmembrane segment at 132–152 threads the bilayer; sequence FLEKCIFSGALALLSFCVCFS. At 153-164 the chain is on the lumenal side; it reads RVYLHYHNLDQV. A helical transmembrane segment spans residues 165 to 185; the sequence is IVGFSVGALTGSLYFFIVGII. At 186–239 the chain is on the cytoplasmic side; the sequence is RELGLINWFLKLRIVRLFYMTDSYNLAPLTLKENYEAYWKRINQRSFNDKSKRD.

This sequence belongs to the dolichyldiphosphatase family.

The protein resides in the endoplasmic reticulum membrane. The enzyme catalyses a di-trans,poly-cis-dolichyl diphosphate + H2O = a di-trans,poly-cis-dolichyl phosphate + phosphate + H(+). Its pathway is protein modification; protein glycosylation. Functionally, non-essential protein which is required for efficient N-glycosylation. Necessary for maintaining optimal levels of dolichol-linked oligosaccharides. Hydrolyzes dolichyl pyrophosphate at a very high rate and dolichyl monophosphate at a much lower rate. Does not act on phosphatidate. This is Dolichyldiphosphatase (CAX4) from Saccharomyces cerevisiae (strain ATCC 204508 / S288c) (Baker's yeast).